A 723-amino-acid polypeptide reads, in one-letter code: ABC transporter F family member 4 (723 aa).

The segment at 1-117 (MGKKKSDESA…KEQKKREAKE (117 aa)) is disordered. Over residues 18 to 31 (SGKDASKDSKKEKL) the composition is skewed to basic and acidic residues. Polar residues predominate over residues 50–65 (GSSSRTKAAPKSTSYT). The span at 72–84 (PSDEEDDGESDEE) shows a compositional bias: acidic residues. Residues 95–117 (KSEQRHLEISVTDKEQKKREAKE) are compositionally biased toward basic and acidic residues. An ABC transporter 1 domain is found at 163 to 423 (ITIESFSVSA…EMNKKFDVYD (261 aa)). 195–202 (GPNGMGKS) contributes to the ATP binding site. Disordered stretches follow at residues 256-275 (LQKS…DDDD) and 427-472 (KAAK…APEA). Residues 266–275 (ENVDGEDDDD) show a composition bias toward acidic residues. The span at 437–446 (QQEKVKDRAK) shows a compositional bias: basic and acidic residues. The region spanning 496 to 721 (LQLIEVSFSY…DLQREIKAEV (226 aa)) is the ABC transporter 2 domain. ATP is bound at residue 530–537 (GPNGAGKS).

This sequence belongs to the ABC transporter superfamily. ABCF family. EF3 (TC 3.A.1.121) subfamily.

This is ABC transporter F family member 4 (ABCF4) from Arabidopsis thaliana (Mouse-ear cress).